The primary structure comprises 184 residues: Photosystem I assembly protein Ycf4 (184 aa).

A run of 2 helical transmembrane segments spans residues F22 to S42 and I57 to S77.

This sequence belongs to the Ycf4 family.

The protein localises to the plastid. It is found in the chloroplast thylakoid membrane. Its function is as follows. Seems to be required for the assembly of the photosystem I complex. This chain is Photosystem I assembly protein Ycf4, found in Lobularia maritima (Sweet alyssum).